The primary structure comprises 652 residues: Threonine--tRNA ligase (652 aa).

Residues 1–63 enclose the TGS domain; the sequence is MAEISLTFPD…TESGDFQLIT (63 aa). The interval 246 to 545 is catalytic; it reads DHRVIGRDLD…LIEMYKGAFP (300 aa). Zn(2+) contacts are provided by Cys340, His391, and His522.

The protein belongs to the class-II aminoacyl-tRNA synthetase family. As to quaternary structure, homodimer. The cofactor is Zn(2+).

The protein localises to the cytoplasm. The enzyme catalyses tRNA(Thr) + L-threonine + ATP = L-threonyl-tRNA(Thr) + AMP + diphosphate + H(+). Functionally, catalyzes the attachment of threonine to tRNA(Thr) in a two-step reaction: L-threonine is first activated by ATP to form Thr-AMP and then transferred to the acceptor end of tRNA(Thr). Also edits incorrectly charged L-seryl-tRNA(Thr). This chain is Threonine--tRNA ligase, found in Leuconostoc mesenteroides subsp. mesenteroides (strain ATCC 8293 / DSM 20343 / BCRC 11652 / CCM 1803 / JCM 6124 / NCDO 523 / NBRC 100496 / NCIMB 8023 / NCTC 12954 / NRRL B-1118 / 37Y).